The following is a 772-amino-acid chain: Major capsid protein (772 aa).

Residues 593-772 (GIAPGRSNAG…AAQADRAEGQ (180 aa)) are disordered. A compositionally biased stretch (gly residues) spans 654–664 (NRGGEAGGVTG). A compositionally biased stretch (pro residues) spans 716–742 (PLPPAPGAAPPPPPGPPNGPPAGPPPS). Low complexity predominate over residues 743-766 (DDGSSNPAAPVPTAIHAPPAAAQA).

This sequence belongs to the totivirus major capsid protein family.

It is found in the virion. Its function is as follows. Capsid protein self-assembles to form an icosahedral capsid with a T=2 symmetry, 40 nm in diameter, and consisting of 60 capsid proteins asymmetric dimers. The capsid encapsulates the genomic dsRNA and the polymerase and remains intact following cell entry to protect the dsRNA from degradation and to prevent unfavorable antiviral responses in the host cell during all the replication cycle of the virus. Nascent transcripts are transcribed within the structural confines of the virion and are extruded into the cytoplasm. Functionally, binds and removes 5' cap structures from cellular mRNA. This chain is Major capsid protein, found in Helminthosporium victoriae virus-190S (Hv190SV).